The following is a 1060-amino-acid chain: Carbamoyl phosphate synthase large chain (1060 aa).

A carboxyphosphate synthetic domain region spans residues 1 to 401; sequence MPKRTDIRKI…SLLKACRSLE (401 aa). The ATP site is built by Arg129, Arg169, Gly175, Gly176, Arg208, Ile210, Glu215, Gly241, Ile242, His243, Gln284, and Glu298. An ATP-grasp 1 domain is found at 133 to 327; it reads KQLMEELNQP…IAKLAAKIAV (195 aa). 3 residues coordinate Mg(2+): Gln284, Glu298, and Asn300. Positions 284, 298, and 300 each coordinate Mn(2+). Positions 402 to 546 are oligomerization domain; the sequence is IGVDHIKIAD…YSTYAVENES (145 aa). The tract at residues 547–929 is carbamoyl phosphate synthetic domain; sequence LISDKASILV…ALYKAFEAAY (383 aa). The ATP-grasp 2 domain maps to 671–861; sequence EATLQALNIP…MAQVATKVIL (191 aa). ATP contacts are provided by Arg707, Ala746, Leu748, Glu752, Gly777, Val778, His779, Ser780, Gln820, and Glu832. Positions 820, 832, and 834 each coordinate Mg(2+). Mn(2+) contacts are provided by Gln820, Glu832, and Asn834. One can recognise an MGS-like domain in the interval 930-1060; sequence LHMPDYGNIV…SRAFTLKVLD (131 aa). Residues 930–1060 are allosteric domain; it reads LHMPDYGNIV…SRAFTLKVLD (131 aa).

It belongs to the CarB family. In terms of assembly, composed of two chains; the small (or glutamine) chain promotes the hydrolysis of glutamine to ammonia, which is used by the large (or ammonia) chain to synthesize carbamoyl phosphate. Tetramer of heterodimers (alpha,beta)4. Requires Mg(2+) as cofactor. The cofactor is Mn(2+).

It carries out the reaction hydrogencarbonate + L-glutamine + 2 ATP + H2O = carbamoyl phosphate + L-glutamate + 2 ADP + phosphate + 2 H(+). The enzyme catalyses hydrogencarbonate + NH4(+) + 2 ATP = carbamoyl phosphate + 2 ADP + phosphate + 2 H(+). The protein operates within amino-acid biosynthesis; L-arginine biosynthesis; carbamoyl phosphate from bicarbonate: step 1/1. It participates in pyrimidine metabolism; UMP biosynthesis via de novo pathway; (S)-dihydroorotate from bicarbonate: step 1/3. In terms of biological role, large subunit of the glutamine-dependent carbamoyl phosphate synthetase (CPSase). CPSase catalyzes the formation of carbamoyl phosphate from the ammonia moiety of glutamine, carbonate, and phosphate donated by ATP, constituting the first step of 2 biosynthetic pathways, one leading to arginine and/or urea and the other to pyrimidine nucleotides. The large subunit (synthetase) binds the substrates ammonia (free or transferred from glutamine from the small subunit), hydrogencarbonate and ATP and carries out an ATP-coupled ligase reaction, activating hydrogencarbonate by forming carboxy phosphate which reacts with ammonia to form carbamoyl phosphate. In Streptococcus agalactiae serotype Ia (strain ATCC 27591 / A909 / CDC SS700), this protein is Carbamoyl phosphate synthase large chain.